Consider the following 377-residue polypeptide: Serine protease inhibitor (377 aa).

The signal sequence occupies residues 1–27 (MAALQAAVSSQLAISFFSSLIVPGAEK). Asparagine 301 is a glycosylation site (N-linked (GlcNAc...) asparagine). Positions 328–349 (GTEAAAATGFGVNFMSMPMQVR) are RCL. Asparagine 361 carries N-linked (GlcNAc...) asparagine glycosylation.

The protein belongs to the serpin family.

Functionally, inhibitor of serine proteases. Inhibits chymotrypsin, cathepsin G and human neutrophil elastase. The polypeptide is Serine protease inhibitor (Cyanea capillata (Lion's mane jellyfish)).